The sequence spans 928 residues: TBC1 domain family member 2A (928 aa).

An N-acetylmethionine modification is found at methionine 1. The span at 1–19 (MEGAGENAPESSSSAPGSE) shows a compositional bias: low complexity. A disordered region spans residues 1–39 (MEGAGENAPESSSSAPGSEESARDPQVPPPEEESGDCAR). The segment at 1–169 (MEGAGENAPE…AGNGPVLHLE (169 aa)) is interaction with CADH1. A PH domain is found at 45–142 (PKKLCGYLSK…WLQQLQMKRW (98 aa)). A disordered region spans residues 225-275 (NKQAQGTGHEPPGEDSPQSGEPQREEQPLASDASTPGREPEDSPKPAPKPS). Residues 295-433 (SEGITRNRTA…KVTQDFTHPP (139 aa)) form an interaction with RAC1 region. Residues 298–416 (ITRNRTAQEK…LMDKNHAKQQ (119 aa)) adopt a coiled-coil conformation. The residue at position 436 (serine 436) is a Phosphoserine. Positions 625–817 (GVPREHRPRV…RVWDAFLYEG (193 aa)) constitute a Rab-GAP TBC domain. The stretch at 875–913 (MKQLRQLRMVHRERLEAELRELEQLKAEYLERRASRRRA) forms a coiled coil. Serine 915 and serine 920 each carry phosphoserine.

In terms of assembly, interacts with activated RAC1 and CDH1. As to expression, expressed in a broad range of tissues, especially in kidney, liver, lung and placenta. Also expressed in keratinocytes and epithelia-containing organs. Isoform 2 is differentially expressed in prostate normal and cancer cells (at protein level).

Its subcellular location is the cytoplasm. It is found in the cytoplasmic vesicle. The protein localises to the cell junction. Acts as a GTPase-activating protein for RAB7A. Signal effector acting as a linker between RAC1 and RAB7A, leading to RAB7A inactivation and subsequent inhibition of cadherin degradation and reduced cell-cell adhesion. The protein is TBC1 domain family member 2A (TBC1D2) of Homo sapiens (Human).